The following is a 251-amino-acid chain: E3 ubiquitin-protein ligase Os06g0535400 (251 aa).

The next 3 helical transmembrane spans lie at 28–48, 102–122, and 127–147; these read VVAA…YCFA, LANR…IVVF, and ADVV…VWLS. Residues 185 to 227 form an RING-type; atypical zinc finger; that stretch reads CCVCLAGMREAQALRDLPRCGHRFHAKCIGKWLTAHPTCPVCR.

The protein localises to the membrane. The enzyme catalyses S-ubiquitinyl-[E2 ubiquitin-conjugating enzyme]-L-cysteine + [acceptor protein]-L-lysine = [E2 ubiquitin-conjugating enzyme]-L-cysteine + N(6)-ubiquitinyl-[acceptor protein]-L-lysine.. Its pathway is protein modification; protein ubiquitination. Possesses E3 ubiquitin-protein ligase in vitro. This is E3 ubiquitin-protein ligase Os06g0535400 from Oryza sativa subsp. japonica (Rice).